The sequence spans 289 residues: Phosphatidylserine decarboxylase proenzyme (289 aa).

Catalysis depends on charge relay system; for autoendoproteolytic cleavage activity residues D92, H149, and S254. S254 acts as the Schiff-base intermediate with substrate; via pyruvic acid; for decarboxylase activity in catalysis. S254 carries the pyruvic acid (Ser); by autocatalysis modification.

This sequence belongs to the phosphatidylserine decarboxylase family. PSD-B subfamily. Prokaryotic type I sub-subfamily. In terms of assembly, heterodimer of a large membrane-associated beta subunit and a small pyruvoyl-containing alpha subunit. Pyruvate is required as a cofactor. In terms of processing, is synthesized initially as an inactive proenzyme. Formation of the active enzyme involves a self-maturation process in which the active site pyruvoyl group is generated from an internal serine residue via an autocatalytic post-translational modification. Two non-identical subunits are generated from the proenzyme in this reaction, and the pyruvate is formed at the N-terminus of the alpha chain, which is derived from the carboxyl end of the proenzyme. The autoendoproteolytic cleavage occurs by a canonical serine protease mechanism, in which the side chain hydroxyl group of the serine supplies its oxygen atom to form the C-terminus of the beta chain, while the remainder of the serine residue undergoes an oxidative deamination to produce ammonia and the pyruvoyl prosthetic group on the alpha chain. During this reaction, the Ser that is part of the protease active site of the proenzyme becomes the pyruvoyl prosthetic group, which constitutes an essential element of the active site of the mature decarboxylase.

It localises to the cell membrane. The catalysed reaction is a 1,2-diacyl-sn-glycero-3-phospho-L-serine + H(+) = a 1,2-diacyl-sn-glycero-3-phosphoethanolamine + CO2. Its pathway is phospholipid metabolism; phosphatidylethanolamine biosynthesis; phosphatidylethanolamine from CDP-diacylglycerol: step 2/2. Functionally, catalyzes the formation of phosphatidylethanolamine (PtdEtn) from phosphatidylserine (PtdSer). The polypeptide is Phosphatidylserine decarboxylase proenzyme (Pseudomonas aeruginosa (strain UCBPP-PA14)).